The chain runs to 102 residues: Large ribosomal subunit protein bL21 (102 aa).

It belongs to the bacterial ribosomal protein bL21 family. As to quaternary structure, part of the 50S ribosomal subunit. Contacts protein L20.

Its function is as follows. This protein binds to 23S rRNA in the presence of protein L20. This is Large ribosomal subunit protein bL21 from Bifidobacterium longum (strain DJO10A).